Reading from the N-terminus, the 297-residue chain is Homoserine kinase (297 aa).

82–92 (PVSRGLGSSAA) contacts ATP.

Belongs to the GHMP kinase family. Homoserine kinase subfamily.

The protein localises to the cytoplasm. It carries out the reaction L-homoserine + ATP = O-phospho-L-homoserine + ADP + H(+). It participates in amino-acid biosynthesis; L-threonine biosynthesis; L-threonine from L-aspartate: step 4/5. Catalyzes the ATP-dependent phosphorylation of L-homoserine to L-homoserine phosphate. The protein is Homoserine kinase of Clostridium botulinum (strain 657 / Type Ba4).